A 249-amino-acid polypeptide reads, in one-letter code: Proteasome subunit alpha type-3 (249 aa).

N-acetylserine is present on S2. Residues S214 and S220 each carry the O-acetylserine modification. K221 participates in a covalent cross-link: Glycyl lysine isopeptide (Lys-Gly) (interchain with G-Cter in ubiquitin).

This sequence belongs to the peptidase T1A family. As to quaternary structure, component of the 20S core complex of the 26S proteasome. The 26S proteasome is composed of a core protease (CP), known as the 20S proteasome, capped at one or both ends by the 19S regulatory particle (RP/PA700). The 20S proteasome core is composed of 28 subunits that are arranged in four stacked rings, resulting in a barrel-shaped structure. The two end rings are each formed by seven alpha subunits, and the two central rings are each formed by seven beta subunits. The catalytic chamber with the active sites is on the inside of the barrel. As to expression, ubiquitous low levels.

The protein localises to the cytoplasm. Its subcellular location is the nucleus. Functionally, the proteasome is a multicatalytic proteinase complex which is characterized by its ability to cleave peptides with Arg, Phe, Tyr, Leu, and Glu adjacent to the leaving group at neutral or slightly basic pH. The proteasome has an ATP-dependent proteolytic activity. The polypeptide is Proteasome subunit alpha type-3 (PAG1) (Arabidopsis thaliana (Mouse-ear cress)).